We begin with the raw amino-acid sequence, 255 residues long: Proteasome subunit alpha type-3 (255 aa).

Residue serine 2 is modified to N-acetylserine. N6-acetyllysine is present on residues lysine 57, lysine 206, and lysine 230. A phosphoserine mark is found at serine 243 and serine 250.

This sequence belongs to the peptidase T1A family. The 26S proteasome consists of a 20S proteasome core and two 19S regulatory subunits. The 20S proteasome core is a barrel-shaped complex made of 28 subunits that are arranged in four stacked rings. The two outer rings are each formed by seven alpha subunits, and the two inner rings are formed by seven beta subunits. The proteolytic activity is exerted by three beta-subunits PSMB5, PSMB6 and PSMB7. Interacts with AURKB. Interacts with CDKN1A. Interacts with MDM2 and RB1. Interacts with the C-terminus of TBXA2R isoform 2. Interacts with DNAJB2.

It is found in the cytoplasm. It localises to the nucleus. Its function is as follows. Component of the 20S core proteasome complex involved in the proteolytic degradation of most intracellular proteins. This complex plays numerous essential roles within the cell by associating with different regulatory particles. Associated with two 19S regulatory particles, forms the 26S proteasome and thus participates in the ATP-dependent degradation of ubiquitinated proteins. The 26S proteasome plays a key role in the maintenance of protein homeostasis by removing misfolded or damaged proteins that could impair cellular functions, and by removing proteins whose functions are no longer required. Associated with the PA200 or PA28, the 20S proteasome mediates ubiquitin-independent protein degradation. This type of proteolysis is required in several pathways including spermatogenesis (20S-PA200 complex) or generation of a subset of MHC class I-presented antigenic peptides (20S-PA28 complex). Binds to the C-terminus of CDKN1A and thereby mediates its degradation. Negatively regulates the membrane trafficking of the cell-surface thromboxane A2 receptor (TBXA2R) isoform 2. The polypeptide is Proteasome subunit alpha type-3 (PSMA3) (Bos taurus (Bovine)).